The primary structure comprises 280 residues: UPF0276 protein NGO_1946 (280 aa).

This sequence belongs to the UPF0276 family.

This is UPF0276 protein NGO_1946 from Neisseria gonorrhoeae (strain ATCC 700825 / FA 1090).